Consider the following 314-residue polypeptide: Olfactory receptor 52K1 (314 aa).

Over 1 to 27 (MLPSNITSTHPAVFLLVGIPGLEHLHA) the chain is Extracellular. An N-linked (GlcNAc...) asparagine glycan is attached at Asn5. A helical membrane pass occupies residues 28-48 (WISIPFCFAYTLALLGNCTLL). The Cytoplasmic portion of the chain corresponds to 49–56 (FIIQADAA). Residues 57 to 77 (LHEPMYLFLAMLATIDLVLSS) form a helical membrane-spanning segment. Over 78–101 (TTLPKMLAIFWFRDQEINFFACLV) the chain is Extracellular. Cysteines 99 and 191 form a disulfide. Residues 102–122 (QMFFLHSFSIMESAVLLAMAF) form a helical membrane-spanning segment. The Cytoplasmic segment spans residues 123–141 (DRYVAICKPLHYTTVLTGS). A helical transmembrane segment spans residues 142-162 (LITKIGMAAVARAVTLMTPLP). The Extracellular portion of the chain corresponds to 163–198 (FLLRRFHYCRGPVIAHCYCEHMAVVRLACGDTSFNN). Residues 199–219 (IYGIAVAMFIVVLDLLFVILS) traverse the membrane as a helical segment. Residues 220-239 (YVFILQAVLQLASQEARYKA) lie on the Cytoplasmic side of the membrane. A helical transmembrane segment spans residues 240 to 260 (FGTCVSHIGAILSTYTPVVIS). The Extracellular segment spans residues 261-275 (SVMHRVARHAAPRVH). Residues 276 to 296 (ILLAIFYLLFPPMVNPIIYGV) traverse the membrane as a helical segment. Residues 297 to 314 (KTKQIREYVLSLFQRKNM) are Cytoplasmic-facing.

The protein belongs to the G-protein coupled receptor 1 family.

It localises to the cell membrane. In terms of biological role, odorant receptor. This Homo sapiens (Human) protein is Olfactory receptor 52K1 (OR52K1).